Consider the following 760-residue polypeptide: Catecholate siderophore receptor Fiu (760 aa).

A signal peptide spans 1–31 (MENNRNFPARQFHSLTFFAGLCIGITPVAQA). The 109-residue stretch at 67 to 175 (PVADTTRTMT…PTGSINMISK (109 aa)) folds into the TBDR plug domain. The region spanning 180-760 (DSGIDASASI…TFLLTANMHF (581 aa)) is the TBDR beta-barrel domain. A TonB C-terminal box motif is present at residues 743–760 (RYHPGEPRTFLLTANMHF).

The protein belongs to the TonB-dependent receptor family.

The protein resides in the cell outer membrane. Involved in the active transport across the outer membrane of iron complexed with catecholate siderophores such as dihydroxybenzoylserine and dihydroxybenzoate. It derives its energy for transport by interacting with the trans-periplasmic membrane protein TonB. Can also transport catechol-substituted cephalosporins. Receptor for microcins M, H47 and E492. This Escherichia coli O157:H7 protein is Catecholate siderophore receptor Fiu (fiu).